Reading from the N-terminus, the 203-residue chain is Small ribosomal subunit protein uS4 (203 aa).

Residues 93–155 (RRLDSIVYRL…SKNLQQIRDA (63 aa)) enclose the S4 RNA-binding domain.

It belongs to the universal ribosomal protein uS4 family. Part of the 30S ribosomal subunit. Contacts protein S5. The interaction surface between S4 and S5 is involved in control of translational fidelity.

Functionally, one of the primary rRNA binding proteins, it binds directly to 16S rRNA where it nucleates assembly of the body of the 30S subunit. With S5 and S12 plays an important role in translational accuracy. This Lactobacillus acidophilus (strain ATCC 700396 / NCK56 / N2 / NCFM) protein is Small ribosomal subunit protein uS4.